The following is a 218-amino-acid chain: MMP 1-O-methyltransferase (218 aa).

S-adenosyl-L-methionine is bound by residues F20, G46, S52, D71, G75, and S124. D141 provides a ligand contact to Mg(2+). Catalysis depends on H144, which acts as the Proton acceptor. R151 is a binding site for S-adenosyl-L-methionine. Residues H169 and D170 each contribute to the Mg(2+) site.

The protein belongs to the methyltransferase superfamily. As to quaternary structure, homodimer. Mg(2+) serves as cofactor.

It carries out the reaction 3,3'-di-O-methyl-4alpha-mannobiose + S-adenosyl-L-methionine = 1,3,3'-tri-O-methyl-4alpha-mannobiose + S-adenosyl-L-homocysteine + H(+). Its activity is regulated as follows. Inhibited by EDTA. Its function is as follows. Involved in the biosynthesis of 3-O-methylmannose polysaccharides (MMP), which are intracellular polymethylated polysaccharides implicated in the modulation of fatty acid metabolism in non-tuberculous mycobacteria. Specifically methylates the 1-OH position of 3,3'-di-O-methyl-4alpha-mannobiose, a probable early precursor of MMP, yielding the reducing end dimannoside of MMP. The protein is MMP 1-O-methyltransferase of Mycolicibacterium hassiacum (strain DSM 44199 / CIP 105218 / JCM 12690 / 3849) (Mycobacterium hassiacum).